The chain runs to 213 residues: 3-demethoxyubiquinol 3-hydroxylase (213 aa).

Residues E62, E92, H95, E144, E176, and H179 each contribute to the Fe cation site.

The protein belongs to the COQ7 family. It depends on Fe cation as a cofactor.

The protein localises to the cell membrane. The enzyme catalyses a 5-methoxy-2-methyl-3-(all-trans-polyprenyl)benzene-1,4-diol + AH2 + O2 = a 3-demethylubiquinol + A + H2O. Its pathway is cofactor biosynthesis; ubiquinone biosynthesis. Functionally, catalyzes the hydroxylation of 2-nonaprenyl-3-methyl-6-methoxy-1,4-benzoquinol during ubiquinone biosynthesis. This is 3-demethoxyubiquinol 3-hydroxylase from Psychrobacter sp. (strain PRwf-1).